Consider the following 493-residue polypeptide: Alcohol-forming fatty acyl-CoA reductase (493 aa).

Belongs to the fatty acyl-CoA reductase family.

It carries out the reaction a long-chain fatty acyl-CoA + 2 NADPH + 2 H(+) = a long-chain primary fatty alcohol + 2 NADP(+) + CoA. In terms of biological role, NADPH-dependent alcohol-forming fatty acyl-coenzyme A reductase that catalyzes the reduction of fatty acyl-CoA to fatty alcohols. The recombinant enzyme accepts saturated and mono-unsaturated fatty acyl-CoAs of 16 to 22 carbons. The protein is Alcohol-forming fatty acyl-CoA reductase of Simmondsia chinensis (Jojoba).